A 657-amino-acid polypeptide reads, in one-letter code: 1-deoxy-D-xylulose-5-phosphate synthase (657 aa).

Histidine 73 serves as a coordination point for thiamine diphosphate. Residues 91–110 (RQEGGMSGYPDRGESEHDIV) are disordered. The span at 101–110 (DRGESEHDIV) shows a compositional bias: basic and acidic residues. 113–115 (SHA) lines the thiamine diphosphate pocket. Aspartate 145 contacts Mg(2+). Thiamine diphosphate is bound by residues 146-147 (GA), asparagine 175, tyrosine 293, and glutamate 375. Asparagine 175 contacts Mg(2+).

This sequence belongs to the transketolase family. DXPS subfamily. Homodimer. It depends on Mg(2+) as a cofactor. Requires thiamine diphosphate as cofactor.

The catalysed reaction is D-glyceraldehyde 3-phosphate + pyruvate + H(+) = 1-deoxy-D-xylulose 5-phosphate + CO2. The protein operates within metabolic intermediate biosynthesis; 1-deoxy-D-xylulose 5-phosphate biosynthesis; 1-deoxy-D-xylulose 5-phosphate from D-glyceraldehyde 3-phosphate and pyruvate: step 1/1. Catalyzes the acyloin condensation reaction between C atoms 2 and 3 of pyruvate and glyceraldehyde 3-phosphate to yield 1-deoxy-D-xylulose-5-phosphate (DXP). In Arthrobacter sp. (strain FB24), this protein is 1-deoxy-D-xylulose-5-phosphate synthase.